The chain runs to 1135 residues: uncharacterized protein (1135 aa).

The first 28 residues, 1 to 28 (MALFPRGILIALVLSFVLNLGLVTKIHA), serve as a signal peptide directing secretion. A run of 7 helical transmembrane segments spans residues 332 to 352 (IVTA…LLAG), 359 to 379 (EYIN…GINI), 393 to 413 (MIQW…NWVM), 495 to 515 (MLVS…AFMV), 522 to 542 (MISI…FLFA), 555 to 575 (MISF…MFAV), and 700 to 720 (IKNI…MYNF).

Belongs to the TrbL/VirB6 family.

The protein localises to the cell membrane. This is an uncharacterized protein from Rickettsia typhi (strain ATCC VR-144 / Wilmington).